The chain runs to 176 residues: MGFPKEGEKVQIHSYKHNGSIHRMWEETTILKGTQSLVIGANDRTVVTESDGRTWITREPAICYFHANYWFNVIGMLREDGVYYYCNLSSPFAYDPEALKYIDYDLDIKVYPDMTYTLLDEDEYEKHSEIMQYPPVIDTILKRNVAHLTQWIHQRKGPFAPDFVDMWYERYLMYRN.

Residue arginine 23 is the Proton donor of the active site. Mg(2+) contacts are provided by asparagine 87, aspartate 103, aspartate 105, aspartate 107, aspartate 120, and glutamate 123.

This sequence belongs to the Ntdp family. The cofactor is Mg(2+).

The enzyme catalyses a ribonucleoside 5'-triphosphate + H2O = a ribonucleoside 5'-diphosphate + phosphate + H(+). It catalyses the reaction a ribonucleoside 5'-diphosphate + H2O = a ribonucleoside 5'-phosphate + phosphate + H(+). Functionally, has nucleoside phosphatase activity towards nucleoside triphosphates and nucleoside diphosphates. This chain is Nucleoside triphosphate/diphosphate phosphatase, found in Bacillus cereus (strain B4264).